We begin with the raw amino-acid sequence, 273 residues long: Phosphatidylglycerol--prolipoprotein diacylglyceryl transferase (273 aa).

The next 7 helical transmembrane spans lie at 19 to 39 (VHWY…LASY), 55 to 75 (LVFY…VLFY), 90 to 110 (VWTG…AMIL), 125 to 145 (FIAP…FIGA), 174 to 194 (PSQI…LWWF), 202 to 222 (MAVS…VEFF), and 230 to 250 (GFIL…MLLI). Residue Arg-138 participates in a 1,2-diacyl-sn-glycero-3-phospho-(1'-sn-glycerol) binding.

The protein belongs to the Lgt family.

It localises to the cell inner membrane. It carries out the reaction L-cysteinyl-[prolipoprotein] + a 1,2-diacyl-sn-glycero-3-phospho-(1'-sn-glycerol) = an S-1,2-diacyl-sn-glyceryl-L-cysteinyl-[prolipoprotein] + sn-glycerol 1-phosphate + H(+). The protein operates within protein modification; lipoprotein biosynthesis (diacylglyceryl transfer). Catalyzes the transfer of the diacylglyceryl group from phosphatidylglycerol to the sulfhydryl group of the N-terminal cysteine of a prolipoprotein, the first step in the formation of mature lipoproteins. This chain is Phosphatidylglycerol--prolipoprotein diacylglyceryl transferase, found in Acinetobacter baylyi (strain ATCC 33305 / BD413 / ADP1).